The primary structure comprises 1976 residues: DNA-directed RNA polymerase V subunit 1 (1976 aa).

Zn(2+) is bound by residues Cys-57, Cys-60, Cys-68, His-71, Cys-98, and Cys-101. Residues Asp-449, Asp-451, and Asp-453 each coordinate Mg(2+). The interval 751–763 is bridging helix; it reads PYEEMAHSIAARE. Repeat unit 1 spans residues 1215–1216; it reads WG. The interval 1215 to 1693 is 18 X 2 AA repeats of [WG]-[GW] repeats; it reads WGKRVDVGTG…AKKFPSSGGW (479 aa). Disordered stretches follow at residues 1272-1291, 1298-1718, and 1847-1976; these read EEEM…LGEP, DFQN…EDNL, and FTKP…QTQT. 2 stretches are compositionally biased toward basic and acidic residues: residues 1281–1291 and 1298–1307; these read SPERDSALGEP and DFQNLHDEGK. The stretch at 1329 to 1330 is repeat 2; the sequence is WG. Residues 1332 to 1348 are compositionally biased toward polar residues; sequence SKSTGGEANPESNWEKT. The segment covering 1349 to 1371 has biased composition (basic and acidic residues); the sequence is TNVEKEDAWSSWNTRKDAQESSK. Repeat copies occupy residues 1378–1379, 1415–1416, 1430–1431, 1439–1440, 1447–1448, 1464–1465, 1498–1499, 1528–1529, 1545–1546, 1562–1563, 1596–1597, 1604–1605, 1621–1622, 1638–1639, and 1641–1642. Residues 1415-1430 show a composition bias toward basic and acidic residues; sequence WGHKSVSDKSWDKKNW. Positions 1491–1501 are enriched in polar residues; the sequence is TESNGATWGSS. Basic and acidic residues predominate over residues 1648-1678; that stretch reads AEDKDTNEDDRNPWVSLKETKSREKDDKERS. 2 consecutive repeat copies span residues 1680–1681 and 1692–1693. Polar residues predominate over residues 1869 to 1878; it reads EQSQPPNQSI. A compositionally biased stretch (low complexity) spans 1886-1976; sequence QTQTQSQSPS…SSQSPSQTQT (91 aa).

Belongs to the RNA polymerase beta' chain family. In terms of assembly, component of the RNA polymerase V complex. Interacts with NRPD4, NRPD2A, and (via C-terminus) with AGO4. Interacts with SUVH2. Mostly expressed in flowers, and, to a lower extent, in leaves. Present in sperm cells.

It localises to the nucleus. The protein resides in the nucleolus. The enzyme catalyses RNA(n) + a ribonucleoside 5'-triphosphate = RNA(n+1) + diphosphate. DNA-dependent RNA polymerase catalyzes the transcription of DNA into RNA using the four ribonucleoside triphosphates as substrates. Largest and catalytic component of RNA polymerase V involved in RNA-directed DNA methylation-dependent (RdDM) silencing of endogenous repeated sequences, including transposable elements. Also required for full erasure of methylation when the RNA trigger is withdrawn. Seems also involved in the synthesis of short-interfering RNAs (siRNA). Essential component of a self-reinforcing loop coupling de novo DNA methylation to siRNA production. Involved in the maintenance of post-transcriptional RNA silencing. The protein is DNA-directed RNA polymerase V subunit 1 (NRPE1) of Arabidopsis thaliana (Mouse-ear cress).